The primary structure comprises 46 residues: Osteocalcin 2 (46 aa).

A Gla domain is found at 1–43 (AVPAGTLSPLQMESLREVCEVNVACDEMADTAGIVAAYTXFYG). T6 carries the phosphothreonine modification. E13, E17, E20, and D26 together coordinate Ca(2+). 4-carboxyglutamate occurs at positions 13, 17, and 20. Cysteines 19 and 25 form a disulfide. Position 27 is a 4-carboxyglutamate (E27).

It belongs to the osteocalcin/matrix Gla protein family. Post-translationally, gamma-carboxyglutamate residues are formed by vitamin K dependent carboxylation by GGCX. These residues are essential for the binding of calcium.

Its subcellular location is the secreted. Functionally, the carboxylated form is one of the main organic components of the bone matrix, which constitutes 1-2% of the total bone protein. The carboxylated form binds strongly to apatite and calcium. The protein is Osteocalcin 2 of Solea senegalensis (Senegalese sole).